Here is an 80-residue protein sequence, read N- to C-terminus: Large ribosomal subunit protein bL31B (80 aa).

It belongs to the bacterial ribosomal protein bL31 family. Type B subfamily. As to quaternary structure, part of the 50S ribosomal subunit.

In Streptococcus pneumoniae serotype 2 (strain D39 / NCTC 7466), this protein is Large ribosomal subunit protein bL31B.